Here is a 433-residue protein sequence, read N- to C-terminus: uncharacterized protein (433 aa).

The chain crosses the membrane as a helical span at residues 36-58; that stretch reads YYYYVQLAFKMLVGVLKNLPVVY. Residues 169–433 form a disordered region; it reads VRVPSRDLQP…GEGRDLPEDN (265 aa). 2 stretches are compositionally biased toward acidic residues: residues 216–227 and 234–254; these read GEPGENGDESDE and GDED…YESD. 3 stretches are compositionally biased toward basic and acidic residues: residues 265 to 280, 354 to 364, and 422 to 433; these read EPDR…RGSE, GGRRPARRDSP, and RRGEGRDLPEDN.

It localises to the host membrane. This is an uncharacterized protein from Psittacid herpesvirus 1 (isolate Amazon parrot/-/97-0001/1997) (PsHV-1).